Consider the following 99-residue polypeptide: Imizoquin biosynthesis cluster protein A (99 aa).

Its pathway is secondary metabolite biosynthesis. In terms of biological role, part of the gene cluster that mediates the biosynthesis of imizoquins A to D, tripeptide-derived alkaloids that serve a protective role against oxidative stress that are essential for normal germination. ImqB is a canonical three-module NRPS that assembles the tripeptide backbone of the imizoquins via condensation of Trp, Tyr, and Leu-derived precursors. N-methylation by imqF and phenol oxidation by imqC, followed by cyclization via the FAD-dependent oxidase imqH carry out the three-step transformation of L-tyrosine into tetrahydroisoquinoline. Importantly, this sequence requires the presence of a free amine in the tyrosine moiety, indicating that isoquinoline formation occurs prior to peptide bond formation. The imidazolidin-4-one ring of imizoquins could form following additional oxidation of the methyl-derived bridgehead carbon by imqH. Lastly, O-methylation by imqG and leucine hydroxylation by imqE complete biosynthesis of the imizoquins. The polypeptide is Imizoquin biosynthesis cluster protein A (Aspergillus flavus (strain ATCC 200026 / FGSC A1120 / IAM 13836 / NRRL 3357 / JCM 12722 / SRRC 167)).